The following is a 313-amino-acid chain: uncharacterized protein (313 aa).

Residues histidine 8, histidine 10, glutamate 126, histidine 180, histidine 207, and aspartate 262 each contribute to the a divalent metal cation site.

This sequence belongs to the metallo-dependent hydrolases superfamily. TatD-type hydrolase family. It depends on a divalent metal cation as a cofactor.

Functionally, putative deoxyribonuclease. This is an uncharacterized protein from Saccharomyces cerevisiae (strain ATCC 204508 / S288c) (Baker's yeast).